The primary structure comprises 143 residues: Large ribosomal subunit protein uL11 (143 aa).

It belongs to the universal ribosomal protein uL11 family. In terms of assembly, part of the ribosomal stalk of the 50S ribosomal subunit. Interacts with L10 and the large rRNA to form the base of the stalk. L10 forms an elongated spine to which L12 dimers bind in a sequential fashion forming a multimeric L10(L12)X complex. In terms of processing, one or more lysine residues are methylated.

Forms part of the ribosomal stalk which helps the ribosome interact with GTP-bound translation factors. In Albidiferax ferrireducens (strain ATCC BAA-621 / DSM 15236 / T118) (Rhodoferax ferrireducens), this protein is Large ribosomal subunit protein uL11.